The sequence spans 246 residues: Alpha-tubulin N-acetyltransferase (246 aa).

The N-acetyltransferase domain occupies 21–202 (LTLVPDGVSR…NNFVVFHSFF (182 aa)). Acetyl-CoA contacts are provided by residues 135–148 (FYVD…GYGK) and 172–181 (SNKLLGFLRK).

The protein belongs to the acetyltransferase ATAT1 family.

The enzyme catalyses L-lysyl-[alpha-tubulin] + acetyl-CoA = N(6)-acetyl-L-lysyl-[alpha-tubulin] + CoA + H(+). In terms of biological role, specifically acetylates 'Lys-40' in alpha-tubulin on the lumenal side of microtubules. Promotes microtubule destabilization and accelerates microtubule dynamics; this activity may be independent of acetylation activity. Acetylates alpha-tubulin with a slow enzymatic rate, due to a catalytic site that is not optimized for acetyl transfer. Enters the microtubule through each end and diffuses quickly throughout the lumen of microtubules. Acetylates only long/old microtubules because of its slow acetylation rate since it does not have time to act on dynamically unstable microtubules before the enzyme is released. This chain is Alpha-tubulin N-acetyltransferase, found in Leishmania major.